The chain runs to 146 residues: Probable calcium-binding protein CML32 (146 aa).

4 consecutive EF-hand domains span residues 1 to 33, 34 to 69, 73 to 108, and 109 to 144; these read MSVAEIFERVDKNKDGKISWDEFAEAIRAFSPS, ITSEEIDNMFREIDVDGDNQIDVAEYASCLMLGGEG, DEDIVMKEAFDLYDIDGDGKISASEIHVVLKRLGEK, and QTIAECIAMVRAVDADGDGFVSFEEFKTMMSCNNKK. 19 residues coordinate Ca(2+): Asp11, Asn13, Asp15, Lys17, Glu22, Asp47, Asp49, Asp51, Gln53, Glu58, Asp86, Asp88, Asp90, Lys92, Glu97, Asp122, Asp124, Asp126, and Glu133.

Its function is as follows. Potential calcium sensor. The protein is Probable calcium-binding protein CML32 (CML32) of Arabidopsis thaliana (Mouse-ear cress).